The following is a 251-amino-acid chain: Pyridoxine 5'-phosphate synthase (251 aa).

A 3-amino-2-oxopropyl phosphate-binding site is contributed by asparagine 7. A 1-deoxy-D-xylulose 5-phosphate-binding site is contributed by 9-10 (DH). Residue arginine 18 coordinates 3-amino-2-oxopropyl phosphate. The active-site Proton acceptor is histidine 43. 1-deoxy-D-xylulose 5-phosphate contacts are provided by arginine 45 and histidine 50. Glutamate 70 (proton acceptor) is an active-site residue. Threonine 100 contributes to the 1-deoxy-D-xylulose 5-phosphate binding site. The active-site Proton donor is the histidine 198. Residues alanine 199 and 220 to 221 (GH) contribute to the 3-amino-2-oxopropyl phosphate site.

It belongs to the PNP synthase family. Homooctamer; tetramer of dimers.

Its subcellular location is the cytoplasm. The catalysed reaction is 3-amino-2-oxopropyl phosphate + 1-deoxy-D-xylulose 5-phosphate = pyridoxine 5'-phosphate + phosphate + 2 H2O + H(+). Its pathway is cofactor biosynthesis; pyridoxine 5'-phosphate biosynthesis; pyridoxine 5'-phosphate from D-erythrose 4-phosphate: step 5/5. Catalyzes the complicated ring closure reaction between the two acyclic compounds 1-deoxy-D-xylulose-5-phosphate (DXP) and 3-amino-2-oxopropyl phosphate (1-amino-acetone-3-phosphate or AAP) to form pyridoxine 5'-phosphate (PNP) and inorganic phosphate. This is Pyridoxine 5'-phosphate synthase from Aromatoleum aromaticum (strain DSM 19018 / LMG 30748 / EbN1) (Azoarcus sp. (strain EbN1)).